The sequence spans 176 residues: Ribosome rescue factor SmrB (176 aa).

The 76-residue stretch at Leu-97–Asp-172 folds into the Smr domain.

The protein belongs to the SmrB family. Associates with collided ribosomes, but not with correctly translating polysomes.

Acts as a ribosome collision sensor. Detects stalled/collided disomes (pairs of ribosomes where the leading ribosome is stalled and a second ribosome has collided with it) and endonucleolytically cleaves mRNA at the 5' boundary of the stalled ribosome. Stalled/collided disomes form a new interface (primarily via the 30S subunits) that binds SmrB. Cleaved mRNA becomes available for tmRNA ligation, leading to ribosomal subunit dissociation and rescue of stalled ribosomes. This chain is Ribosome rescue factor SmrB, found in Photobacterium profundum (strain SS9).